The sequence spans 309 residues: Homoserine O-acetyltransferase (309 aa).

Cys142 (acyl-thioester intermediate) is an active-site residue. Substrate-binding residues include Lys163 and Ser192. The active-site Proton acceptor is the His235. Residue Glu237 is part of the active site. Arg249 contacts substrate.

The protein belongs to the MetA family.

It localises to the cytoplasm. It catalyses the reaction L-homoserine + acetyl-CoA = O-acetyl-L-homoserine + CoA. Its pathway is amino-acid biosynthesis; L-methionine biosynthesis via de novo pathway; O-acetyl-L-homoserine from L-homoserine: step 1/1. In terms of biological role, transfers an acetyl group from acetyl-CoA to L-homoserine, forming acetyl-L-homoserine. This chain is Homoserine O-acetyltransferase, found in Allorhizobium ampelinum (strain ATCC BAA-846 / DSM 112012 / S4) (Agrobacterium vitis (strain S4)).